The chain runs to 546 residues: Amidase FG08078 (546 aa).

Catalysis depends on charge relay system residues K129 and S204. Catalysis depends on S228, which acts as the Acyl-ester intermediate.

It belongs to the amidase family.

The protein operates within mycotoxin biosynthesis. In terms of biological role, amidase; part of the gene cluster that mediates the biosynthesis of butenolide, a mycotoxin that shows antibiotic activity but does not seem to play a major role in the spread of head blight in wheat. Butenolide is derived from glutamic acid via a 4-acetamido-2-butenoic acid intermediate. The predicted function of the NADH:flavin oxidoreductase FG08077, the cytochrome P450 monooxygenase FG08079, the decarboxylase FG08083, and the putative acetyltransferase FG08082 are consistent with this pathway, however, the respective activities of the butelonide biosynthesis cluster enzymes have still to be experimentally determined. The polypeptide is Amidase FG08078 (Gibberella zeae (strain ATCC MYA-4620 / CBS 123657 / FGSC 9075 / NRRL 31084 / PH-1) (Wheat head blight fungus)).